The sequence spans 150 residues: Ribonuclease K6 (150 aa).

Positions 1-23 (MVLCFPLLLLLLVLWGPVCLLHA) are cleaved as a signal peptide. The active-site Proton acceptor is histidine 38. Disulfide bonds link cysteine 46–cysteine 104, cysteine 60–cysteine 114, cysteine 78–cysteine 129, and cysteine 85–cysteine 92. Asparagine 55 is a glycosylation site (N-linked (GlcNAc...) asparagine). Substrate contacts are provided by residues 61-65 (KHQNT) and lysine 86. Residue asparagine 100 is glycosylated (N-linked (GlcNAc...) asparagine). A substrate-binding site is contributed by arginine 105. Histidine 145 acts as the Proton donor in catalysis.

Belongs to the pancreatic ribonuclease family. In terms of assembly, interacts (via N-terminus) with bacterial lipopolysaccharide (LPS).

It is found in the secreted. The protein resides in the lysosome. The protein localises to the cytoplasmic granule. Ribonuclease which shows a preference for the pyrimidines uridine and cytosine. Has potent antibacterial activity against a range of Gram-positive and Gram-negative bacteria, including P.aeruginosa, A.baumanii, M.luteus, S.aureus, E.faecalis, E.faecium, S.saprophyticus and E.coli. Causes loss of bacterial membrane integrity, and also promotes agglutination of Gram-negative bacteria. Probably contributes to urinary tract sterility. Bactericidal activity is independent of RNase activity. This chain is Ribonuclease K6 (RNASE6), found in Papio hamadryas (Hamadryas baboon).